Reading from the N-terminus, the 3948-residue chain is Hybrid PKS-NRPS synthetase fsa1 (3948 aa).

A Ketosynthase family 3 (KS3) domain is found at 4–438 (SEPIAVIGSA…GTNAHAIIEA (435 aa)). Residues Cys-177, His-316, and His-358 each act as for beta-ketoacyl synthase activity in the active site. A malonyl-CoA:ACP transacylase (MAT) domain region spans residues 543–846 (IFTGQGTQWP…LDTIEAISEG (304 aa)). The N-terminal hotdog fold stretch occupies residues 931–1066 (HPLLGRRCHD…AQIKASLGTP (136 aa)). Positions 931–1233 (HPLLGRRCHD…MELVPFSPAT (303 aa)) are dehydratase (DH) domain. Residues 931 to 1235 (HPLLGRRCHD…LVPFSPATPA (305 aa)) enclose the PKS/mFAS DH domain. His-964 functions as the Proton acceptor; for dehydratase activity in the catalytic mechanism. Residues 1081–1235 (LRPVSVDRFY…LVPFSPATPA (155 aa)) are C-terminal hotdog fold. The active-site Proton donor; for dehydratase activity is Asp-1141. The segment at 1381–1578 (YEQGFGLNLV…TTPPVHKILP (198 aa)) is methyltransferase (MT) domain. A ketoreductase (KR) domain region spans residues 2105 to 2277 (TFLLIGLTGE…VAASSIDISS (173 aa)). Residues 2389 to 2464 (AIIKESFIVR…DLVDESLDLL (76 aa)) form the Carrier 1 domain. Position 2424 is an O-(pantetheine 4'-phosphoryl)serine (Ser-2424). The disordered stretch occupies residues 2475–2555 (EAGNAHPAKP…TDNLTPPRTF (81 aa)). Polar residues-rich tracts occupy residues 2487 to 2505 (VIPQ…QGTS) and 2513 to 2528 (GSDS…LTSW). Residues 2529–2541 (DRQDLSPPDKSDD) show a composition bias toward basic and acidic residues. Residues 2542–2551 (APNSTDNLTP) are compositionally biased toward polar residues. Residues 2547–2976 (DNLTPPRTFP…TQVLLRSYLS (430 aa)) form a condensation (C) domain region. Residues 3000-3402 (LKVAVDAGKA…PDTFFGTSGT (403 aa)) form an adenylation (A) (KR) domain region. The region spanning 3540–3617 (KSLTASEKRL…AMASVLEDCG (78 aa)) is the Carrier 2 domain. Ser-3577 bears the O-(pantetheine 4'-phosphoryl)serine mark. The interval 3653-3870 (LTGSSGYLGR…MPVNEIVEAI (218 aa)) is reductase (RED) domain.

This sequence in the C-terminal section; belongs to the NRP synthetase family.

It catalyses the reaction L-serine + 7 malonyl-CoA + acetyl-CoA + 2 S-adenosyl-L-methionine + ATP + 8 NADPH + 11 H(+) = (5S)-3-[(2E,6R,8E,10E,12E)-2,6-dimethyltetradeca-2,8,10,12-tetraenoyl]-5-(hydroxymethyl)pyrrolidine-2,4-dione + AMP + 2 S-adenosyl-L-homocysteine + 7 CO2 + diphosphate + 8 NADP(+) + 8 CoA + 6 H2O. Its pathway is mycotoxin biosynthesis. Hybrid PKS-NRPS synthetase; part of the gene cluster that mediates the biosynthesis of HIV-1 integrase inhibitor equisetin and of fusarisetin A, both trans-fused decalin-containing tetramic acids showing also antimicrobial activity. The PKS module of fsa1 together with the enoylreductase fsa3 catalyze the formation of the polyketide unit which is then conjugated to L-serine by the condensation domain of the fsa1 NRPS module. Activity of the Dieckmann cyclase domain (RED) results in release of the Dieckmann product intermediate. Diels-Alderase fsa2 is involved in endo-selective Diels-Alder cycloaddition to form the decalin ring, leading to the production of N-desmethylequisetin also called trichosetin. Subsequent N-methylation is carried out by fsa4 to give equisetin. The enzymatic gene responsible for the conversion of equisetin to fusarisetin A has not been identified yet and is probably located outside of the fsa cluster. The sequence is that of Hybrid PKS-NRPS synthetase fsa1 from Fusarium sp. (strain FN080326).